A 480-amino-acid polypeptide reads, in one-letter code: Cysteine--tRNA ligase (480 aa).

C29 contributes to the Zn(2+) binding site. Residues 31 to 41 carry the 'HIGH' region motif; sequence ITVYDYCHLGH. Zn(2+)-binding residues include C215, H240, and E244. Residues 272 to 276 carry the 'KMSKS' region motif; it reads KMSKS. K275 lines the ATP pocket.

It belongs to the class-I aminoacyl-tRNA synthetase family. In terms of assembly, monomer. The cofactor is Zn(2+).

The protein resides in the cytoplasm. The catalysed reaction is tRNA(Cys) + L-cysteine + ATP = L-cysteinyl-tRNA(Cys) + AMP + diphosphate. This is Cysteine--tRNA ligase from Microcystis aeruginosa (strain NIES-843 / IAM M-2473).